Reading from the N-terminus, the 218-residue chain is Large ribosomal subunit protein uL3 (218 aa).

Positions 133 to 158 (RGQGASHGAQAVHRRPGSIGGCATPG) are disordered.

Belongs to the universal ribosomal protein uL3 family. Part of the 50S ribosomal subunit. Forms a cluster with proteins L14 and L19.

Functionally, one of the primary rRNA binding proteins, it binds directly near the 3'-end of the 23S rRNA, where it nucleates assembly of the 50S subunit. The polypeptide is Large ribosomal subunit protein uL3 (Mycolicibacterium vanbaalenii (strain DSM 7251 / JCM 13017 / BCRC 16820 / KCTC 9966 / NRRL B-24157 / PYR-1) (Mycobacterium vanbaalenii)).